Consider the following 411-residue polypeptide: Tyrosine--tRNA ligase (411 aa).

Tyrosine 34 contacts L-tyrosine. The 'HIGH' region motif lies at 39-48 (CTATSLHIGS). L-tyrosine contacts are provided by tyrosine 171 and glutamine 175. A 'KMSKS' region motif is present at residues 231 to 235 (KMGKT). Lysine 234 contacts ATP. Positions 345 to 411 (ISAYELFHEA…GKKRHILVRV (67 aa)) constitute an S4 RNA-binding domain.

Belongs to the class-I aminoacyl-tRNA synthetase family. TyrS type 1 subfamily. As to quaternary structure, homodimer.

It localises to the cytoplasm. It catalyses the reaction tRNA(Tyr) + L-tyrosine + ATP = L-tyrosyl-tRNA(Tyr) + AMP + diphosphate + H(+). In terms of biological role, catalyzes the attachment of tyrosine to tRNA(Tyr) in a two-step reaction: tyrosine is first activated by ATP to form Tyr-AMP and then transferred to the acceptor end of tRNA(Tyr). In Rickettsia peacockii (strain Rustic), this protein is Tyrosine--tRNA ligase.